Reading from the N-terminus, the 60-residue chain is Potassium channel toxin alpha-KTx 3.6 (60 aa).

A signal peptide spans 1-22 (MKVFFAVLITLFICSMIIGIHG). 3 disulfides stabilise this stretch: Cys29–Cys49, Cys35–Cys54, and Cys39–Cys56. Lysine amide is present on Lys59.

The protein belongs to the short scorpion toxin superfamily. Potassium channel inhibitor family. Alpha-KTx 03 subfamily. As to expression, expressed by the venom gland.

Its subcellular location is the secreted. In terms of biological role, blocks voltage-gated potassium channels. At 2 uM, blocks rat Kv1.1/KCNA1 and Kv1.3/KCNA3, has a strong effect on rat Kv1.2/KCNA2 and Kv1.6/KCNA6 as well as a moderate effect on Shaker IR. The protein is Potassium channel toxin alpha-KTx 3.6 of Olivierus martensii (Manchurian scorpion).